Consider the following 486-residue polypeptide: Glutamyl-tRNA(Gln) amidotransferase subunit A (486 aa).

Residues Lys77 and Ser152 each act as charge relay system in the active site. The active-site Acyl-ester intermediate is the Ser176.

Belongs to the amidase family. GatA subfamily. Heterotrimer of A, B and C subunits.

The enzyme catalyses L-glutamyl-tRNA(Gln) + L-glutamine + ATP + H2O = L-glutaminyl-tRNA(Gln) + L-glutamate + ADP + phosphate + H(+). Allows the formation of correctly charged Gln-tRNA(Gln) through the transamidation of misacylated Glu-tRNA(Gln) in organisms which lack glutaminyl-tRNA synthetase. The reaction takes place in the presence of glutamine and ATP through an activated gamma-phospho-Glu-tRNA(Gln). This chain is Glutamyl-tRNA(Gln) amidotransferase subunit A, found in Lactococcus lactis subsp. cremoris (strain SK11).